Consider the following 546-residue polypeptide: Probable zinc metalloprotease EGY2, chloroplastic (546 aa).

The N-terminal 64 residues, 1–64 (MQLPAMSCSP…QIRNRRFVCQ (64 aa)), are a transit peptide targeting the chloroplast. The interval 67–143 (TETEPDGDGN…DATPASDAQE (77 aa)) is disordered. Residues 69–86 (TEPDGDGNGDEEKEELGD) are compositionally biased toward acidic residues. Polar residues-rich tracts occupy residues 89-110 (SSPSVDSVTQENGSAESETNAD) and 118-130 (NTEPLSSSDTVQN). Transmembrane regions (helical) follow at residues 257 to 277 (AVPEWFAAASFGVVTIFTLLL), 301 to 321 (VYGALVTAAIIGVHEIAHILA), 326 to 346 (GIKLAVPYFVPSWQIGSFGAI), 364 to 384 (AAGPLAGFSLGFVLLLLGFIL), 427 to 447 (PLVLWAWAGLLINAINSIPAG), 474 to 494 (LLGISALFNDVAFYWVVLIFF), and 514 to 534 (YISIGVAILLFGLLVCLPYPF).

The protein belongs to the peptidase M50B family.

It is found in the plastid. The protein resides in the chloroplast membrane. Functionally, probable membrane-associated metalloprotease that may be involved in chloroplast development. This Oryza sativa subsp. japonica (Rice) protein is Probable zinc metalloprotease EGY2, chloroplastic (EGY2).